Here is an 85-residue protein sequence, read N- to C-terminus: Large ribosomal subunit protein uL23 (85 aa).

Belongs to the universal ribosomal protein uL23 family. As to quaternary structure, part of the 50S ribosomal subunit. Interacts with protein L29 and weakly with protein L39e.

Its function is as follows. Binds to a specific region on the 23S rRNA. Located at the polypeptide exit tunnel on the outside of the subunit. The sequence is that of Large ribosomal subunit protein uL23 from Haloarcula marismortui (strain ATCC 43049 / DSM 3752 / JCM 8966 / VKM B-1809) (Halobacterium marismortui).